Consider the following 61-residue polypeptide: MKIHVFLFVLFFFLVPIATRVKCAVKDTYSCFIMRGKCRHECHDFEKPIGFCTKLNANCYM.

Residues 1 to 23 form the signal peptide; that stretch reads MKIHVFLFVLFFFLVPIATRVKC. 2 disulfides stabilise this stretch: Cys31-Cys59 and Cys38-Cys52.

This sequence belongs to the beta-defensin family.

The protein resides in the secreted. In terms of biological role, has antibacterial activity. This Homo sapiens (Human) protein is Beta-defensin 133 (DEFB133).